We begin with the raw amino-acid sequence, 173 residues long: Succinate dehydrogenase assembly factor 3, mitochondrial (173 aa).

A mitochondrion-targeting transit peptide spans 1–59 (MFRPSTSLALRSTLRQLASASNQPIPPGSEINAVKRTVATILPPIRLYRRIIRAHRRLD). Residues 149–173 (FPPEKQRELAEKAAADAGLSVKKDE) are disordered. The segment covering 152 to 162 (EKQRELAEKAA) has biased composition (basic and acidic residues).

This sequence belongs to the complex I LYR family. SDHAF3 subfamily. In terms of assembly, interacts with the iron-sulfur protein subunit within the SDH catalytic dimer.

Its subcellular location is the mitochondrion matrix. Functionally, plays an essential role in the assembly of succinate dehydrogenase (SDH), an enzyme complex (also referred to as respiratory complex II) that is a component of both the tricarboxylic acid (TCA) cycle and the mitochondrial electron transport chain, and which couples the oxidation of succinate to fumarate with the reduction of ubiquinone (coenzyme Q) to ubiquinol. Promotes maturation of the iron-sulfur protein subunit of the SDH catalytic dimer, protecting it from the deleterious effects of oxidants. May act together with SDHAF1. This Mycosarcoma maydis (Corn smut fungus) protein is Succinate dehydrogenase assembly factor 3, mitochondrial.